The sequence spans 381 residues: Hydrogenase nickel incorporation protein HupN (381 aa).

Over methionine 1–alanine 39 the chain is Cytoplasmic. A helical transmembrane segment spans residues valine 40–phenylalanine 60. The Periplasmic portion of the chain corresponds to alanine 61 to arginine 63. Residues proline 64–alanine 84 form a helical membrane-spanning segment. The Cytoplasmic segment spans residues aspartate 85–tyrosine 110. The chain crosses the membrane as a helical span at residues phenylalanine 111–valine 131. The Periplasmic segment spans residues serine 132–serine 149. The helical transmembrane segment at valine 150 to tryptophan 170 threads the bilayer. Residues arginine 171–tyrosine 215 are Cytoplasmic-facing. The chain crosses the membrane as a helical span at residues proline 216 to isoleucine 236. At serine 237–arginine 243 the chain is on the periplasmic side. The chain crosses the membrane as a helical span at residues glycine 244–valine 264. The Cytoplasmic portion of the chain corresponds to aspartate 265–threonine 292. Residues isoleucine 293 to isoleucine 313 traverse the membrane as a helical segment. Residues glycine 314–serine 333 lie on the Periplasmic side of the membrane. Residues leucine 334–valine 354 form a helical membrane-spanning segment. At leucine 355–valine 381 the chain is on the cytoplasmic side.

The protein belongs to the NiCoT transporter (TC 2.A.52) family.

It localises to the cell inner membrane. Involved in nickel incorporation/metabolism into the hydrogenase apoprotein. This Bradyrhizobium diazoefficiens (strain JCM 10833 / BCRC 13528 / IAM 13628 / NBRC 14792 / USDA 110) protein is Hydrogenase nickel incorporation protein HupN (hupN).